A 78-amino-acid polypeptide reads, in one-letter code: DNA-directed RNA polymerase subunit Rpo5 (78 aa).

The protein belongs to the archaeal Rpo5/eukaryotic RPB5 RNA polymerase subunit family. In terms of assembly, part of the RNA polymerase complex.

Its subcellular location is the cytoplasm. The catalysed reaction is RNA(n) + a ribonucleoside 5'-triphosphate = RNA(n+1) + diphosphate. DNA-dependent RNA polymerase (RNAP) catalyzes the transcription of DNA into RNA using the four ribonucleoside triphosphates as substrates. This chain is DNA-directed RNA polymerase subunit Rpo5, found in Methanococcus vannielii (strain ATCC 35089 / DSM 1224 / JCM 13029 / OCM 148 / SB).